The primary structure comprises 406 residues: Bifunctional enzyme IspD/IspF (406 aa).

Positions 1–247 (MSLIRVNGEA…ALFFNPAKDT (247 aa)) are 2-C-methyl-D-erythritol 4-phosphate cytidylyltransferase. Residues 248–406 (FIGMGFDTHA…HVSMRYKQKL (159 aa)) are 2-C-methyl-D-erythritol 2,4-cyclodiphosphate synthase. Positions 254 and 256 each coordinate a divalent metal cation. 4-CDP-2-C-methyl-D-erythritol 2-phosphate-binding positions include 254–256 (DTH) and 280–281 (HS). Histidine 288 serves as a coordination point for a divalent metal cation. Residues 302 to 304 (DIG), 307 to 311 (FPDND), 378 to 381 (TTME), phenylalanine 385, and lysine 388 each bind 4-CDP-2-C-methyl-D-erythritol 2-phosphate.

This sequence in the N-terminal section; belongs to the IspD/TarI cytidylyltransferase family. IspD subfamily. In the C-terminal section; belongs to the IspF family. A divalent metal cation serves as cofactor.

It catalyses the reaction 2-C-methyl-D-erythritol 4-phosphate + CTP + H(+) = 4-CDP-2-C-methyl-D-erythritol + diphosphate. It carries out the reaction 4-CDP-2-C-methyl-D-erythritol 2-phosphate = 2-C-methyl-D-erythritol 2,4-cyclic diphosphate + CMP. It participates in isoprenoid biosynthesis; isopentenyl diphosphate biosynthesis via DXP pathway; isopentenyl diphosphate from 1-deoxy-D-xylulose 5-phosphate: step 2/6. The protein operates within isoprenoid biosynthesis; isopentenyl diphosphate biosynthesis via DXP pathway; isopentenyl diphosphate from 1-deoxy-D-xylulose 5-phosphate: step 4/6. Bifunctional enzyme that catalyzes the formation of 4-diphosphocytidyl-2-C-methyl-D-erythritol from CTP and 2-C-methyl-D-erythritol 4-phosphate (MEP) (IspD), and catalyzes the conversion of 4-diphosphocytidyl-2-C-methyl-D-erythritol 2-phosphate (CDP-ME2P) to 2-C-methyl-D-erythritol 2,4-cyclodiphosphate (ME-CPP) with a corresponding release of cytidine 5-monophosphate (CMP) (IspF). This chain is Bifunctional enzyme IspD/IspF, found in Helicobacter pylori (strain P12).